The chain runs to 390 residues: Putative 8-amino-7-oxononanoate synthase (390 aa).

R19 contributes to the substrate binding site. Residue 105–106 participates in pyridoxal 5'-phosphate binding; that stretch reads GY. Residue H130 participates in substrate binding. Pyridoxal 5'-phosphate is bound by residues S177, 202 to 205, and 234 to 237; these read DEAH and TFSK. K237 carries the post-translational modification N6-(pyridoxal phosphate)lysine. T351 is a binding site for substrate.

It belongs to the class-II pyridoxal-phosphate-dependent aminotransferase family. BioF subfamily. Homodimer. The cofactor is pyridoxal 5'-phosphate.

It carries out the reaction 6-carboxyhexanoyl-[ACP] + L-alanine + H(+) = (8S)-8-amino-7-oxononanoate + holo-[ACP] + CO2. It participates in cofactor biosynthesis; biotin biosynthesis. Its function is as follows. Catalyzes the decarboxylative condensation of pimeloyl-[acyl-carrier protein] and L-alanine to produce 8-amino-7-oxononanoate (AON), [acyl-carrier protein], and carbon dioxide. The chain is Putative 8-amino-7-oxononanoate synthase (bioF) from Geobacillus kaustophilus (strain HTA426).